Here is a 529-residue protein sequence, read N- to C-terminus: Meiosis 1 arrest protein (529 aa).

Disordered regions lie at residues 180 to 201 (KGIQERSDSPSPTEEPSNDESS) and 504 to 529 (AASKASSAAFLPSDSEEGEEERPSHT). A compositionally biased stretch (polar residues) spans 188–200 (SPSPTEEPSNDES). The residue at position 516 (Ser516) is a Phosphoserine.

Expressed in germ cells of the testis. Expressed from spermatogonia to spermatids. Expressed at very low levels in lung, stomach, thymus. Not detected in Sertoli cells.

It localises to the cytoplasm. Its function is as follows. Required for meiosis I progression during spermatogenesis. This Mus musculus (Mouse) protein is Meiosis 1 arrest protein (M1ap).